Reading from the N-terminus, the 478-residue chain is Membrane-bound lytic murein transglycosylase F (478 aa).

An N-terminal signal peptide occupies residues 1–29 (MFPDSSYLFSMRSLSRFLIAIFGCGALLA). Positions 30 to 269 (SCDSFERSVL…RLLDRYYGHI (240 aa)) are non-LT domain. Positions 271–478 (RLHHTDVNGI…RKEDDSWQEF (208 aa)) are LT domain. The active site involves E316.

In the N-terminal section; belongs to the bacterial solute-binding protein 3 family. It in the C-terminal section; belongs to the transglycosylase Slt family.

The protein localises to the cell outer membrane. It catalyses the reaction Exolytic cleavage of the (1-&gt;4)-beta-glycosidic linkage between N-acetylmuramic acid (MurNAc) and N-acetylglucosamine (GlcNAc) residues in peptidoglycan, from either the reducing or the non-reducing ends of the peptidoglycan chains, with concomitant formation of a 1,6-anhydrobond in the MurNAc residue.. Its function is as follows. Murein-degrading enzyme that degrades murein glycan strands and insoluble, high-molecular weight murein sacculi, with the concomitant formation of a 1,6-anhydromuramoyl product. Lytic transglycosylases (LTs) play an integral role in the metabolism of the peptidoglycan (PG) sacculus. Their lytic action creates space within the PG sacculus to allow for its expansion as well as for the insertion of various structures such as secretion systems and flagella. This is Membrane-bound lytic murein transglycosylase F from Nitrosospira multiformis (strain ATCC 25196 / NCIMB 11849 / C 71).